A 244-amino-acid chain; its full sequence is Uridylate kinase (244 aa).

12 to 15 (KLSG) contributes to the ATP binding site. Residues 20 to 25 (GERGVG) are involved in allosteric activation by GTP. Glycine 54 provides a ligand contact to UMP. ATP is bound by residues glycine 55 and arginine 59. Residues aspartate 74 and 135 to 142 (IGSPYFST) contribute to the UMP site. Residues asparagine 163, tyrosine 169, and aspartate 172 each contribute to the ATP site.

This sequence belongs to the UMP kinase family. In terms of assembly, homohexamer.

The protein resides in the cytoplasm. The catalysed reaction is UMP + ATP = UDP + ADP. Its pathway is pyrimidine metabolism; CTP biosynthesis via de novo pathway; UDP from UMP (UMPK route): step 1/1. Allosterically activated by GTP. Inhibited by UTP. Catalyzes the reversible phosphorylation of UMP to UDP. This Streptococcus suis (strain 98HAH33) protein is Uridylate kinase.